A 476-amino-acid polypeptide reads, in one-letter code: ATP synthase subunit beta 2 (476 aa).

160–167 (GGAGVGKT) provides a ligand contact to ATP.

It belongs to the ATPase alpha/beta chains family. As to quaternary structure, F-type ATPases have 2 components, CF(1) - the catalytic core - and CF(0) - the membrane proton channel. CF(1) has five subunits: alpha(3), beta(3), gamma(1), delta(1), epsilon(1). CF(0) has four main subunits: a(1), b(1), b'(1) and c(9-12).

The protein localises to the cell inner membrane. It carries out the reaction ATP + H2O + 4 H(+)(in) = ADP + phosphate + 5 H(+)(out). Functionally, produces ATP from ADP in the presence of a proton gradient across the membrane. The catalytic sites are hosted primarily by the beta subunits. In Bradyrhizobium sp. (strain BTAi1 / ATCC BAA-1182), this protein is ATP synthase subunit beta 2.